We begin with the raw amino-acid sequence, 145 residues long: Neuromedin-S (145 aa).

Positions 1–25 (MKYLAQFPSILAIYCFCLLQIPSSG) are cleaved as a signal peptide. Propeptides lie at residues 26-64 (FPRP…IYKR), 65-100 (FLFH…ADRR), and 101-103 (MKT). An Asparagine amide modification is found at Asn-136. A propeptide spanning residues 139–145 (NLDFDTW) is cleaved from the precursor.

It belongs to the NmU family.

It is found in the secreted. Its function is as follows. Implicated in the regulation of circadian rhythms through autocrine and/or paracrine actions. The polypeptide is Neuromedin-S (NMS) (Bos taurus (Bovine)).